The sequence spans 231 residues: Large ribosomal subunit protein uL1 (231 aa).

It belongs to the universal ribosomal protein uL1 family. As to quaternary structure, part of the 50S ribosomal subunit.

Binds directly to 23S rRNA. The L1 stalk is quite mobile in the ribosome, and is involved in E site tRNA release. Its function is as follows. Protein L1 is also a translational repressor protein, it controls the translation of the L11 operon by binding to its mRNA. In Acinetobacter baumannii (strain AB307-0294), this protein is Large ribosomal subunit protein uL1.